Consider the following 377-residue polypeptide: N5-carboxyaminoimidazole ribonucleotide synthase (377 aa).

Residues Arg93, Lys133, 138 to 144, 175 to 178, Glu183, His206, and 257 to 258 each bind ATP; these read GYDGKGQ, EEFV, and NE. An ATP-grasp domain is found at 97–287; the sequence is KALLDHAGVR…QFENHLRAVC (191 aa).

This sequence belongs to the PurK/PurT family. Homodimer.

The catalysed reaction is 5-amino-1-(5-phospho-beta-D-ribosyl)imidazole + hydrogencarbonate + ATP = 5-carboxyamino-1-(5-phospho-D-ribosyl)imidazole + ADP + phosphate + 2 H(+). It participates in purine metabolism; IMP biosynthesis via de novo pathway; 5-amino-1-(5-phospho-D-ribosyl)imidazole-4-carboxylate from 5-amino-1-(5-phospho-D-ribosyl)imidazole (N5-CAIR route): step 1/2. Catalyzes the ATP-dependent conversion of 5-aminoimidazole ribonucleotide (AIR) and HCO(3)(-) to N5-carboxyaminoimidazole ribonucleotide (N5-CAIR). This Vibrio vulnificus (strain CMCP6) protein is N5-carboxyaminoimidazole ribonucleotide synthase.